Here is a 229-residue protein sequence, read N- to C-terminus: MDSLDRSCQDWCDRKQHWLEIGPPDLVERKGSLTLRSHHKKYSKPVLVYSWHRDREAFPKGYDIEGPEKVKKLCNSTYRRLGTDESPIWTSETHEKLSQMCLNTEWVEMKSKALLNEETVSSGIIERVTGLPATGFGAVFPRHPPDWSKMCALTTYSEDYVPPYDYQPHAYPCQDDYSIVHRKCRSQFTDLNGSKRFGINTWHDESGIYANSDVKQKLYPLTSGPIVPI.

Topologically, residues 1–123 (MDSLDRSCQD…LLNEETVSSG (123 aa)) are extracellular. The N-linked (GlcNAc...) asparagine glycan is linked to N75. A helical transmembrane segment spans residues 124–140 (IIERVTGLPATGFGAVF). Residues 141–229 (PRHPPDWSKM…PLTSGPIVPI (89 aa)) lie on the Cytoplasmic side of the membrane. Residues 153 to 163 (LTTYSEDYVPP) form a mn region.

As to quaternary structure, microtubule inner protein component of sperm flagellar doublet microtubules. Interacts with MYH9. Interacts with MYH10. In terms of tissue distribution, expressed in undifferentiated embryonic stem cells. Expressed in airway epithelial cells.

Its subcellular location is the cytoplasm. It is found in the cytoskeleton. It localises to the cilium axoneme. The protein resides in the flagellum axoneme. The protein localises to the cell membrane. Functionally, microtubule inner protein (MIP) part of the dynein-decorated doublet microtubules (DMTs) in cilia axoneme, which is required for motile cilia beating. This Homo sapiens (Human) protein is Cilia- and flagella-associated protein 95.